A 166-amino-acid polypeptide reads, in one-letter code: RNA polymerase sigma factor SigV (166 aa).

A Polymerase core binding motif is present at residues 38-51; it reads DIVQESIKKALSSV. Residues 131-150 constitute a DNA-binding region (H-T-H motif); sequence LEEIAEITGENTNTVKTRLY.

The protein belongs to the sigma-70 factor family. ECF subfamily. In terms of assembly, interacts with RsiV.

Functionally, sigma factors are initiation factors that promote the attachment of RNA polymerase to specific initiation sites and are then released. Positively regulates the expression of proteins involved in stress responses against bacitracin, paraquat and tellurite. This chain is RNA polymerase sigma factor SigV (sigV), found in Bacillus subtilis (strain 168).